The sequence spans 150 residues: Pyruvoyl-dependent arginine decarboxylase (150 aa).

Serine 42 is subject to Pyruvic acid (Ser).

Belongs to the PdaD family. Pyruvate is required as a cofactor.

The enzyme catalyses L-arginine + H(+) = agmatine + CO2. The chain is Pyruvoyl-dependent arginine decarboxylase from Methanopyrus kandleri (strain AV19 / DSM 6324 / JCM 9639 / NBRC 100938).